Consider the following 168-residue polypeptide: NADH-quinone oxidoreductase subunit B (168 aa).

Residues Cys-37, Cys-38, Cys-103, and Cys-132 each coordinate [4Fe-4S] cluster.

It belongs to the complex I 20 kDa subunit family. NDH-1 is composed of 14 different subunits. Subunits NuoB, C, D, E, F, and G constitute the peripheral sector of the complex. It depends on [4Fe-4S] cluster as a cofactor.

It localises to the cell inner membrane. It carries out the reaction a quinone + NADH + 5 H(+)(in) = a quinol + NAD(+) + 4 H(+)(out). In terms of biological role, NDH-1 shuttles electrons from NADH, via FMN and iron-sulfur (Fe-S) centers, to quinones in the respiratory chain. The immediate electron acceptor for the enzyme in this species is believed to be ubiquinone. Couples the redox reaction to proton translocation (for every two electrons transferred, four hydrogen ions are translocated across the cytoplasmic membrane), and thus conserves the redox energy in a proton gradient. The protein is NADH-quinone oxidoreductase subunit B of Campylobacter fetus subsp. fetus (strain 82-40).